We begin with the raw amino-acid sequence, 442 residues long: Proline--tRNA ligase (442 aa).

The protein belongs to the class-II aminoacyl-tRNA synthetase family. ProS type 2 subfamily. As to quaternary structure, homodimer.

The protein resides in the cytoplasm. The catalysed reaction is tRNA(Pro) + L-proline + ATP = L-prolyl-tRNA(Pro) + AMP + diphosphate. In terms of biological role, catalyzes the attachment of proline to tRNA(Pro) in a two-step reaction: proline is first activated by ATP to form Pro-AMP and then transferred to the acceptor end of tRNA(Pro). In Brucella anthropi (strain ATCC 49188 / DSM 6882 / CCUG 24695 / JCM 21032 / LMG 3331 / NBRC 15819 / NCTC 12168 / Alc 37) (Ochrobactrum anthropi), this protein is Proline--tRNA ligase.